A 72-amino-acid chain; its full sequence is Translation initiation factor IF-1 (72 aa).

One can recognise an S1-like domain in the interval 1–72; that stretch reads MAKEDCIEME…TKGRIKFRSK (72 aa).

The protein belongs to the IF-1 family. As to quaternary structure, component of the 30S ribosomal translation pre-initiation complex which assembles on the 30S ribosome in the order IF-2 and IF-3, IF-1 and N-formylmethionyl-tRNA(fMet); mRNA recruitment can occur at any time during PIC assembly.

The protein localises to the cytoplasm. One of the essential components for the initiation of protein synthesis. Stabilizes the binding of IF-2 and IF-3 on the 30S subunit to which N-formylmethionyl-tRNA(fMet) subsequently binds. Helps modulate mRNA selection, yielding the 30S pre-initiation complex (PIC). Upon addition of the 50S ribosomal subunit IF-1, IF-2 and IF-3 are released leaving the mature 70S translation initiation complex. The protein is Translation initiation factor IF-1 of Francisella tularensis subsp. tularensis (strain FSC 198).